The sequence spans 385 residues: Pectate lyase E (385 aa).

The N-terminal stretch at 1–30 (MKNTRVRSIGTKSLLAAVVTAALMATSAYA) is a signal peptide. Residue D164 coordinates Ca(2+). The stretch at 177 to 182 (DHVTIS) is repeat 1. Residues 177–218 (DHVTISDGSFTDDKYTTKDGEKYVQHDGALDIKKGSDYVTIS) are 2 X 6 AA approximate repeats. D207 provides a ligand contact to Ca(2+). Repeat 2 spans residues 213–218 (DYVTIS). The active site involves R260.

This sequence belongs to the polysaccharide lyase 1 family. PLBC subfamily. The cofactor is Ca(2+).

It is found in the secreted. The enzyme catalyses Eliminative cleavage of (1-&gt;4)-alpha-D-galacturonan to give oligosaccharides with 4-deoxy-alpha-D-galact-4-enuronosyl groups at their non-reducing ends.. It participates in glycan metabolism; pectin degradation; 2-dehydro-3-deoxy-D-gluconate from pectin: step 2/5. Its function is as follows. Involved in maceration and soft-rotting of plant tissue. This is Pectate lyase E (pelE) from Dickeya chrysanthemi (Pectobacterium chrysanthemi).